A 325-amino-acid chain; its full sequence is L-lactate dehydrogenase (325 aa).

NAD(+) is bound by residues valine 19, aspartate 40, lysine 45, tyrosine 70, and 84-85 (GA). Positions 87 and 93 each coordinate substrate. Residues threonine 106, 123–125 (AAN), and serine 148 contribute to the NAD(+) site. 125 to 128 (NPVD) serves as a coordination point for substrate. 153-156 (DSAR) is a binding site for substrate. Beta-D-fructose 1,6-bisphosphate contacts are provided by arginine 158 and histidine 173. Histidine 180 functions as the Proton acceptor in the catalytic mechanism. Tyrosine 225 bears the Phosphotyrosine mark. Threonine 234 is a substrate binding site.

The protein belongs to the LDH/MDH superfamily. LDH family. Homotetramer.

It localises to the cytoplasm. The catalysed reaction is (S)-lactate + NAD(+) = pyruvate + NADH + H(+). It participates in fermentation; pyruvate fermentation to lactate; (S)-lactate from pyruvate: step 1/1. With respect to regulation, allosterically activated by fructose 1,6-bisphosphate (FBP). In terms of biological role, catalyzes the conversion of lactate to pyruvate. This is L-lactate dehydrogenase from Latilactobacillus sakei (Lactobacillus sakei).